Here is an 873-residue protein sequence, read N- to C-terminus: Protein SEY1 (873 aa).

The tract at residues 1-21 (MVANGHFAGSADGQDSSSYEH) is disordered. Over 1–749 (MVANGHFAGS…KRSAIGGITQ (749 aa)) the chain is Cytoplasmic. Positions 49 to 307 (GFNYHLISVF…IPADGFAVYA (259 aa)) constitute a GB1/RHD3-type G domain. 59–66 (GSQSTGKS) contacts GTP. A coiled-coil region spans residues 482–506 (SNYQQELSLYQKDLERTSGQLRRDE). The tract at residues 676–703 (LDKWIGHTPSSATPADEEDLTPIGGVDD) is disordered. A compositionally biased stretch (acidic residues) spans 690 to 703 (ADEEDLTPIGGVDD). The helical transmembrane segment at 750–770 (VPLYFYGLLFALGWNEILAVL) threads the bilayer. Residues 771 to 773 (RNP) are Lumenal-facing. The helical transmembrane segment at 774 to 794 (VYFLLLFVCAIGAYITYQLNL) threads the bilayer. Over 795 to 873 (WGPIIKMTEA…EDVDDDDDDF (79 aa)) the chain is Cytoplasmic. The segment at 828-873 (RQAMAMSGARNATEEHEMSRLSRKPAERGGRKNRADEDVDDDDDDF) is disordered. Positions 839–863 (ATEEHEMSRLSRKPAERGGRKNRAD) are enriched in basic and acidic residues. Positions 864–873 (EDVDDDDDDF) are enriched in acidic residues.

Belongs to the TRAFAC class dynamin-like GTPase superfamily. GB1/RHD3 GTPase family. RHD3 subfamily.

It localises to the endoplasmic reticulum membrane. Functionally, cooperates with the reticulon proteins and tubule-shaping DP1 family proteins to generate and maintain the structure of the tubular endoplasmic reticulum network. Has GTPase activity, which is required for its function in ER organization. The chain is Protein SEY1 from Ajellomyces capsulatus (strain G186AR / H82 / ATCC MYA-2454 / RMSCC 2432) (Darling's disease fungus).